The following is a 276-amino-acid chain: Cell division protein FtsQ (276 aa).

The Cytoplasmic portion of the chain corresponds to 1-27 (MSQAALNTRNSEEEVSSRRNNGTRLAG). Residues 28–48 (ILFLLTVLTTVLVSGWVVLGW) form a helical membrane-spanning segment. Over 49-276 (MEDAQRLPLS…QQNQAQAEQQ (228 aa)) the chain is Periplasmic. Residues 55-126 (LPLSKLVLTG…DELKIHLVEY (72 aa)) form the POTRA domain. The tract at residues 255-276 (GWAPLPPEESTQQQNQAQAEQQ) is disordered. Positions 266 to 276 (QQQNQAQAEQQ) are enriched in low complexity.

This sequence belongs to the FtsQ/DivIB family. FtsQ subfamily. Part of a complex composed of FtsB, FtsL and FtsQ. The complex can be formed before its localization to the division site. This tripartite complex can be divided further into a subcomplex of FtsB and FtsL, which forms in the absence of FtsQ. Interacts with FtsA, FtsK, FtsL, FtsB, FtsW, FtsI, FtsN, FtsX and YmgF.

The protein localises to the cell inner membrane. Its function is as follows. Essential cell division protein. May link together the upstream cell division proteins, which are predominantly cytoplasmic, with the downstream cell division proteins, which are predominantly periplasmic. May control correct divisome assembly. The polypeptide is Cell division protein FtsQ (Escherichia coli (strain K12)).